The chain runs to 340 residues: GTPase Obg (340 aa).

An Obg domain is found at 1-159 (MGFIDEVKLC…KHVLLKLKVL (159 aa)). Residues 160–329 (SDVGIIGMPN…LSEKLKKSNS (170 aa)) enclose the OBG-type G domain. Residues 166–173 (GMPNAGKS), 191–195 (FTTVR), 212–215 (DIPG), 279–282 (NKCD), and 310–312 (NGD) contribute to the GTP site. Mg(2+)-binding residues include S173 and T193.

This sequence belongs to the TRAFAC class OBG-HflX-like GTPase superfamily. OBG GTPase family. Monomer. It depends on Mg(2+) as a cofactor.

It is found in the cytoplasm. In terms of biological role, an essential GTPase which binds GTP, GDP and possibly (p)ppGpp with moderate affinity, with high nucleotide exchange rates and a fairly low GTP hydrolysis rate. Plays a role in control of the cell cycle, stress response, ribosome biogenesis and in those bacteria that undergo differentiation, in morphogenesis control. This chain is GTPase Obg, found in Wolbachia pipientis wMel.